Reading from the N-terminus, the 450-residue chain is Phosphoglucosamine mutase (450 aa).

The Phosphoserine intermediate role is filled by Ser101. Residues Ser101, Asp240, Asp242, and Asp244 each contribute to the Mg(2+) site. Position 101 is a phosphoserine (Ser101).

This sequence belongs to the phosphohexose mutase family. It depends on Mg(2+) as a cofactor. Activated by phosphorylation.

The catalysed reaction is alpha-D-glucosamine 1-phosphate = D-glucosamine 6-phosphate. Its function is as follows. Catalyzes the conversion of glucosamine-6-phosphate to glucosamine-1-phosphate. This is Phosphoglucosamine mutase from Streptococcus equi subsp. zooepidemicus (strain H70).